Consider the following 327-residue polypeptide: Nuclear apoptosis-inducing factor 1 (327 aa).

The tract at residues 1 to 70 is required for nuclear localization and apoptosis-inducing activity; that stretch reads MAVPAKKRKM…CRRELPEVKK (70 aa). A compositionally biased stretch (low complexity) spans 87–98; the sequence is RAAVEGGEAPGP. 2 disordered regions span residues 87-118 and 303-327; these read RAAV…GGGP and NTAN…SIIQ. Residues 104 to 118 are compositionally biased toward gly residues; the sequence is AGGPGTGGGSGGGGP. Residues 316–327 are compositionally biased toward polar residues; sequence VAQNGQPDSIIQ.

The protein belongs to the NAIF1 family. In terms of assembly, interacts with HARBI1. As to expression, widely expressed.

It is found in the nucleus. Its function is as follows. Induces apoptosis. The polypeptide is Nuclear apoptosis-inducing factor 1 (NAIF1) (Homo sapiens (Human)).